A 146-amino-acid chain; its full sequence is Ribosome-binding factor A (146 aa).

A disordered region spans residues 127–146 (EFAGEADPYKKPEDDEAAES).

It belongs to the RbfA family. In terms of assembly, monomer. Binds 30S ribosomal subunits, but not 50S ribosomal subunits or 70S ribosomes.

It is found in the cytoplasm. One of several proteins that assist in the late maturation steps of the functional core of the 30S ribosomal subunit. Associates with free 30S ribosomal subunits (but not with 30S subunits that are part of 70S ribosomes or polysomes). Required for efficient processing of 16S rRNA. May interact with the 5'-terminal helix region of 16S rRNA. The chain is Ribosome-binding factor A from Renibacterium salmoninarum (strain ATCC 33209 / DSM 20767 / JCM 11484 / NBRC 15589 / NCIMB 2235).